The chain runs to 505 residues: MRLRRLALFPGVALLLAAARLAAASDVLELTDDNFESRVSDTGSAGLMLVEFFAPWCGHCKRLAPEYEAAATRLKGIVPLAKVDCTANTNTCNKYGVSGYPTLKIFRDGEEAGAYDGPRTADGIVSHLKKQAGPASVPLRTEEEFKKFISDKDASVVGFFDDLFSEAHSEFLKAASNLRDNYRFAHTNVKSLVNEYDDNGEGIILFRPSHLTNKFEDKTVAYTEQKMTSGKIKKFIQENIFGICPHMTEDNKDLIQGKDLLIAYYDVDYEKNAKGSNYWRNRVMMVAKKFLDAGHKLNFAVASRKTFSHELSDFGLESTAGEIPVVAIRTAKGEKFVMQEEFSRDGKALERFLQDYFDGNLKRYLKSEPIPESNDGPVKVVVAENFDEIVNNENKDVLIEFYAPWCGHCKNLEPKYKELGEKLSKDPNIVIAKMDATANDVPSPYEVRGFPTIYFSPANKKLNPKKYEGGRELSDFISYLQREATNPPVIQEEKPKKKKKAQEDL.

The N-terminal stretch at 1 to 24 (MRLRRLALFPGVALLLAAARLAAA) is a signal peptide. The 109-residue stretch at 25 to 133 (SDVLELTDDN…IVSHLKKQAG (109 aa)) folds into the Thioredoxin 1 domain. Catalysis depends on nucleophile residues C57 and C60. C57 and C60 are oxidised to a cystine. Residue K61 is modified to N6-methyllysine. C85 and C92 are oxidised to a cystine. K129 is modified (N6-succinyllysine). N6-acetyllysine is present on K152. K218 carries the N6-succinyllysine modification. K252 is subject to N6-acetyllysine. T319 is modified (phosphothreonine). Residues 343 to 485 (SRDGKALERF…FISYLQREAT (143 aa)) enclose the Thioredoxin 2 domain. K362 carries the post-translational modification N6-acetyllysine. Catalysis depends on nucleophile residues C406 and C409. C406 and C409 are oxidised to a cystine. A disordered region spans residues 484 to 505 (ATNPPVIQEEKPKKKKKAQEDL). A compositionally biased stretch (basic and acidic residues) spans 491–505 (QEEKPKKKKKAQEDL). N6-acetyllysine is present on K494. The Prevents secretion from ER signature appears at 502–505 (QEDL).

Belongs to the protein disulfide isomerase family. In terms of assembly, part of the major histocompatibility complex class I (MHC I) peptide loading complex composed of TAP1, TAP2, B2M, MHC heavy chain, TAPBP, PDIA3, and CALR. Interacts with ERP27 and CANX. Interacts with SERPINA2 and with SERPINA1. Interacts with ATP2A2. Post-translationally, within the major histocompatibility complex class I (MHC I) peptide loading complex forms reversible disulfide-linked heterodimers with TAPBP as part of its protein folding chaperone activity. This is essential to assist the dynamic assembly of the MHC I complex with high affinity antigens in the endoplasmic reticulum. In terms of processing, phosphorylated.

It localises to the endoplasmic reticulum. The protein localises to the endoplasmic reticulum lumen. The protein resides in the melanosome. It catalyses the reaction Catalyzes the rearrangement of -S-S- bonds in proteins.. Protein disulfide isomerase that catalyzes the formation, isomerization, and reduction or oxidation of disulfide bonds in client proteins and functions as a protein folding chaperone. Core component of the major histocompatibility complex class I (MHC I) peptide loading complex where it functions as an essential folding chaperone for TAPBP. Through TAPBP, assists the dynamic assembly of the MHC I complex with high affinity antigens in the endoplasmic reticulum. Therefore, plays a crucial role in the presentation of antigens to cytotoxic T cells in adaptive immunity. The polypeptide is Protein disulfide-isomerase A3 (PDIA3) (Chlorocebus aethiops (Green monkey)).